We begin with the raw amino-acid sequence, 133 residues long: Large ribosomal subunit protein uL16 (133 aa).

It belongs to the universal ribosomal protein uL16 family. In terms of assembly, part of the 50S ribosomal subunit.

Binds 23S rRNA and is also seen to make contacts with the A and possibly P site tRNAs. This chain is Large ribosomal subunit protein uL16, found in Blochmanniella floridana.